A 344-amino-acid polypeptide reads, in one-letter code: MDIKAQLLQLKEEIKKEVQDIFDEKVLNEIKVKYLGKKGLITSVLKSLGSLSPEERKEVGQLANSIKEFLEEALKAKQEEIEKKKLEEILRKERLDISLPAEWFEPSASHPVLTTLKEITEIFKSMGFTVESGPEVEYEDYNFTMLNIPEHHPARDMQDTFYTSNGMLLRTHTSPVQIRSMLKKKPPIAIVAPGRVYRKDMDPTHSPMFHQIEGLMVDKNVSFKDLKGILKIFLENIFGKDIPIRFRPSYFPFTEPSAEVDVGCTVCKGKGCRVCKNTGWLEILGCGMVDPNVFKAVGIGPEDYTGFAFGLGIERIAMLRYQITDIRLLFTNDLRFNLQFRGIE.

Glu-255 lines the Mg(2+) pocket.

This sequence belongs to the class-II aminoacyl-tRNA synthetase family. Phe-tRNA synthetase alpha subunit type 1 subfamily. In terms of assembly, tetramer of two alpha and two beta subunits. The cofactor is Mg(2+).

Its subcellular location is the cytoplasm. It carries out the reaction tRNA(Phe) + L-phenylalanine + ATP = L-phenylalanyl-tRNA(Phe) + AMP + diphosphate + H(+). This chain is Phenylalanine--tRNA ligase alpha subunit, found in Sulfurihydrogenibium sp. (strain YO3AOP1).